Here is a 678-residue protein sequence, read N- to C-terminus: Macrolide export ATP-binding/permease protein MacB 1 (678 aa).

Residues 11–249 (LRLENVSREF…PKMVDIPSVI (239 aa)) enclose the ABC transporter domain. ATP is bound at residue 47–54 (GTSGSGKS). The next 4 membrane-spanning stretches (helical) occupy residues 303-323 (ALTM…VALG), 558-578 (IAVI…LVSV), 608-628 (LVCL…GLLF), and 641-661 (AASI…FGFF).

This sequence belongs to the ABC transporter superfamily. Macrolide exporter (TC 3.A.1.122) family. As to quaternary structure, homodimer. Part of the tripartite efflux system MacAB-TolC, which is composed of an inner membrane transporter, MacB, a periplasmic membrane fusion protein, MacA, and an outer membrane component, TolC. The complex forms a large protein conduit and can translocate molecules across both the inner and outer membranes. Interacts with MacA.

The protein resides in the cell inner membrane. Functionally, part of the tripartite efflux system MacAB-TolC. MacB is a non-canonical ABC transporter that contains transmembrane domains (TMD), which form a pore in the inner membrane, and an ATP-binding domain (NBD), which is responsible for energy generation. Confers resistance against macrolides. The protein is Macrolide export ATP-binding/permease protein MacB 1 of Yersinia pestis bv. Antiqua (strain Nepal516).